Here is a 155-residue protein sequence, read N- to C-terminus: D-aminoacyl-tRNA deacylase (155 aa).

A Gly-cisPro motif, important for rejection of L-amino acids motif is present at residues 137–138 (GP).

Belongs to the DTD family. Homodimer.

It is found in the cytoplasm. The enzyme catalyses glycyl-tRNA(Ala) + H2O = tRNA(Ala) + glycine + H(+). The catalysed reaction is a D-aminoacyl-tRNA + H2O = a tRNA + a D-alpha-amino acid + H(+). Functionally, an aminoacyl-tRNA editing enzyme that deacylates mischarged D-aminoacyl-tRNAs. Also deacylates mischarged glycyl-tRNA(Ala), protecting cells against glycine mischarging by AlaRS. Acts via tRNA-based rather than protein-based catalysis; rejects L-amino acids rather than detecting D-amino acids in the active site. By recycling D-aminoacyl-tRNA to D-amino acids and free tRNA molecules, this enzyme counteracts the toxicity associated with the formation of D-aminoacyl-tRNA entities in vivo and helps enforce protein L-homochirality. The chain is D-aminoacyl-tRNA deacylase from Roseiflexus sp. (strain RS-1).